Here is a 364-residue protein sequence, read N- to C-terminus: Transcription factor SPEECHLESS (364 aa).

Positions 35-109 (GEISPTAAST…QKMSHVTVER (75 aa)) are disordered. At Ser-38 the chain carries Phosphoserine; by ASK7. Thr-40 bears the Phosphothreonine; by ASK7 mark. Over residues 40-53 (TAASTPKDGTTSSK) the composition is skewed to polar residues. Ser-43 carries the post-translational modification Phosphoserine; by ASK7. Thr-44 is modified (phosphothreonine; by ASK7). Phosphoserine; by ASK7 is present on Ser-65. Acidic residues predominate over residues 79–92 (EDEEEEDGDGEAEE). The segment at 99 to 112 (QQKMSHVTVERNRR) is basic motif. The bHLH domain maps to 99-150 (QQKMSHVTVERNRRKQMNEHLTVLRSLMPCFYVKRGDQASIIGGVVEYISEL). The interval 113-150 (KQMNEHLTVLRSLMPCFYVKRGDQASIIGGVVEYISEL) is helix-loop-helix motif. A Phosphoserine; by ASK7 modification is found at Ser-171. The interval 171–227 (SPRVVPSPRPSPPVLSPRKPPLSPRINHHQIHHHLLLPPISPRTPQPTSPYRAIPPQ) is disordered. The segment covering 175 to 193 (VPSPRPSPPVLSPRKPPLS) has biased composition (pro residues). Ser-177 carries the phosphoserine; by ASK7, MPK3 and MPK6 modification. A Phosphoserine; by ASK7 modification is found at Ser-181. Phosphoserine; by CDKA-1, ASK7, MPK3 and MPK6 is present on Ser-186. Ser-193 is subject to Phosphoserine; by MPK3 and MPK6. Over residues 196–205 (INHHQIHHHL) the composition is skewed to basic residues. Over residues 209–218 (PISPRTPQPT) the composition is skewed to pro residues. At Ser-211 the chain carries Phosphoserine; by MPK3 and MPK6. Position 214 is a phosphothreonine; by ASK7, MPK3 and MPK6 (Thr-214). Residue Ser-219 is modified to Phosphoserine; by ASK7, MPK3 and MPK6.

As to quaternary structure, homodimer. Forms dimers with SCRM and SCRM2. May interact with CDKA-1. In terms of processing, phosphorylated by ASK7/BIN2 and ASK3/SK12; this post-translational modification inhibits activity and limit epidermal cell proliferation. Phosphorylation by MPK3 and MPK6 leads to the inhibition of stomatal fate and to degradation. Stabilized by CDKA-1-mediated phosphorylation at Ser-186 which promotes stomatal development. In terms of tissue distribution, expressed in developing leaf epidermis. Reduced accumulation in the stomatal lineage ground cells (SLGCs) where BASL is polarized in the cell cortex. Observed in small cells of non-protruding hypocotyl cell files and of developing cotyledon epidermis. Restricted to meristemoids (stomatal precursor cell) in leaves epidermis, mostly in dividing cells of non-protruding cell files.

Its subcellular location is the nucleus. Its activity is regulated as follows. Negatively regulated through phosphorylation by the MAPK module. Activity is constrained by polarized BASL in stomatal lineage ground cells (SLGCs) undergoing ACD. Transcription factor acting as an integration node for stomata and brassinosteroid (BR) signaling pathways to control stomatal initiation and development. Activates transcription when in the presence of SCRM/ICE1. Functions as a dimer with SCRM or SCRM2 during stomatal initiation. Required for the initiation, the spacing and the formation of stomata, by promoting the first asymmetric cell divisions. Together with FMA and MUTE, modulates the stomata formation. Involved in the regulation of growth reduction under osmotic stress (e.g. mannitol), associated with a quick decrease of meristemoid mother cells (MMCs) number lower stomatal index and density. In Arabidopsis thaliana (Mouse-ear cress), this protein is Transcription factor SPEECHLESS.